The primary structure comprises 68 residues: Probable tautomerase Cj0270 (68 aa).

Proline 2 serves as the catalytic Proton acceptor; via imino nitrogen.

The protein belongs to the 4-oxalocrotonate tautomerase family.

This chain is Probable tautomerase Cj0270, found in Campylobacter jejuni subsp. jejuni serotype O:2 (strain ATCC 700819 / NCTC 11168).